The primary structure comprises 158 residues: Cyclic pyranopterin monophosphate synthase (158 aa).

Substrate is bound by residues Leu73–His75 and Met110–Glu111. Asp125 is an active-site residue.

Belongs to the MoaC family. As to quaternary structure, homohexamer; trimer of dimers.

The enzyme catalyses (8S)-3',8-cyclo-7,8-dihydroguanosine 5'-triphosphate = cyclic pyranopterin phosphate + diphosphate. It participates in cofactor biosynthesis; molybdopterin biosynthesis. In terms of biological role, catalyzes the conversion of (8S)-3',8-cyclo-7,8-dihydroguanosine 5'-triphosphate to cyclic pyranopterin monophosphate (cPMP). This is Cyclic pyranopterin monophosphate synthase from Azotobacter vinelandii (strain DJ / ATCC BAA-1303).